A 311-amino-acid polypeptide reads, in one-letter code: tRNA (guanine-N(7)-)-methyltransferase (311 aa).

S-adenosyl-L-methionine is bound by residues Glu28, Glu53, and Asp103. Asp103 is a catalytic residue. Substrate-binding residues include Lys107 and Asp139.

The protein belongs to the class I-like SAM-binding methyltransferase superfamily. TrmB family.

The catalysed reaction is guanosine(46) in tRNA + S-adenosyl-L-methionine = N(7)-methylguanosine(46) in tRNA + S-adenosyl-L-homocysteine. It participates in tRNA modification; N(7)-methylguanine-tRNA biosynthesis. In terms of biological role, catalyzes the formation of N(7)-methylguanine at position 46 (m7G46) in tRNA. This is tRNA (guanine-N(7)-)-methyltransferase from Thermus thermophilus (strain ATCC BAA-163 / DSM 7039 / HB27).